We begin with the raw amino-acid sequence, 238 residues long: Flagellar L-ring protein (238 aa).

Residues 1 to 16 (MRKLILISLCIFFLAS) form the signal peptide. C17 carries the N-palmitoyl cysteine lipid modification. Residue C17 is the site of S-diacylglycerol cysteine attachment.

The protein belongs to the FlgH family. In terms of assembly, the basal body constitutes a major portion of the flagellar organelle and consists of four rings (L,P,S, and M) mounted on a central rod.

It localises to the cell outer membrane. Its subcellular location is the bacterial flagellum basal body. Assembles around the rod to form the L-ring and probably protects the motor/basal body from shearing forces during rotation. This chain is Flagellar L-ring protein, found in Thermodesulfovibrio yellowstonii (strain ATCC 51303 / DSM 11347 / YP87).